A 151-amino-acid polypeptide reads, in one-letter code: Nascent polypeptide-associated complex subunit beta (151 aa).

The region spanning 32 to 97 (EQDDTKLMEA…PQEKDVTQLI (66 aa)) is the NAC-A/B domain. The segment at 122–151 (GKTPSMGGENAGADEDIPDLIEGQKFDEVE) is disordered.

It belongs to the NAC-beta family. In terms of assembly, part of the nascent polypeptide-associated complex (NAC), consisting of EGD2 and EGD1. NAC associates with ribosomes via EGD1.

The protein localises to the cytoplasm. It localises to the nucleus. In terms of biological role, component of the nascent polypeptide-associated complex (NAC), a dynamic component of the ribosomal exit tunnel, protecting the emerging polypeptides from interaction with other cytoplasmic proteins to ensure appropriate nascent protein targeting. The NAC complex also promotes mitochondrial protein import by enhancing productive ribosome interactions with the outer mitochondrial membrane and blocks the inappropriate interaction of ribosomes translating non-secretory nascent polypeptides with translocation sites in the membrane of the endoplasmic reticulum. EGD1 may act as a transcription factor that exert a negative effect on the expression of several genes that are transcribed by RNA polymerase II. This Meyerozyma guilliermondii (strain ATCC 6260 / CBS 566 / DSM 6381 / JCM 1539 / NBRC 10279 / NRRL Y-324) (Yeast) protein is Nascent polypeptide-associated complex subunit beta (EGD1).